The following is a 169-amino-acid chain: Lipoprotein signal peptidase (169 aa).

Transmembrane regions (helical) follow at residues 10 to 30 (LPWLWITVLVFVLDQLSKAFF), 40 to 60 (IVVIPDLFSWTLAYNTGAAFS), 68 to 88 (WQRWLFALIAIVVSAILVVWL), and 94 to 114 (GETWLAIALALVLGGALGNLY). Active-site residues include aspartate 124 and aspartate 143. A helical transmembrane segment spans residues 135–155 (YFPAFNLADSAITVGAVMLAL).

This sequence belongs to the peptidase A8 family.

It is found in the cell inner membrane. The catalysed reaction is Release of signal peptides from bacterial membrane prolipoproteins. Hydrolyzes -Xaa-Yaa-Zaa-|-(S,diacylglyceryl)Cys-, in which Xaa is hydrophobic (preferably Leu), and Yaa (Ala or Ser) and Zaa (Gly or Ala) have small, neutral side chains.. It functions in the pathway protein modification; lipoprotein biosynthesis (signal peptide cleavage). Functionally, this protein specifically catalyzes the removal of signal peptides from prolipoproteins. The polypeptide is Lipoprotein signal peptidase (Pseudomonas aeruginosa (strain UCBPP-PA14)).